Here is a 242-residue protein sequence, read N- to C-terminus: Proteasome subunit alpha (242 aa).

The protein belongs to the peptidase T1A family. As to quaternary structure, the 20S proteasome core is composed of 14 alpha and 14 beta subunits that assemble into four stacked heptameric rings, resulting in a barrel-shaped structure. The two inner rings, each composed of seven catalytic beta subunits, are sandwiched by two outer rings, each composed of seven alpha subunits. The catalytic chamber with the active sites is on the inside of the barrel. Has a gated structure, the ends of the cylinder being occluded by the N-termini of the alpha-subunits. Is capped at one or both ends by the proteasome regulatory ATPase, PAN.

It localises to the cytoplasm. With respect to regulation, the formation of the proteasomal ATPase PAN-20S proteasome complex, via the docking of the C-termini of PAN into the intersubunit pockets in the alpha-rings, triggers opening of the gate for substrate entry. Interconversion between the open-gate and close-gate conformations leads to a dynamic regulation of the 20S proteasome proteolysis activity. Its function is as follows. Component of the proteasome core, a large protease complex with broad specificity involved in protein degradation. The polypeptide is Proteasome subunit alpha (Sulfurisphaera tokodaii (strain DSM 16993 / JCM 10545 / NBRC 100140 / 7) (Sulfolobus tokodaii)).